The sequence spans 86 residues: MERNQRKTLYGRVVSDKMDKTITVVVETKRNHPVYGKRINYSKKYKAHDENNVAKEGDIVRIMETRPLSATKRFRLVEVVEKAVII.

It belongs to the universal ribosomal protein uS17 family. Part of the 30S ribosomal subunit.

One of the primary rRNA binding proteins, it binds specifically to the 5'-end of 16S ribosomal RNA. In Streptococcus pyogenes serotype M3 (strain ATCC BAA-595 / MGAS315), this protein is Small ribosomal subunit protein uS17.